We begin with the raw amino-acid sequence, 431 residues long: Serine--tRNA ligase (431 aa).

Residues 41-66 are disordered; that stretch reads QSRTQELQAERNARSKSIGEAARRGE. 240-242 is an L-serine binding site; that stretch reads TSE. 271–273 provides a ligand contact to ATP; that stretch reads RSE. Position 294 (glutamate 294) interacts with L-serine. 358-361 is an ATP binding site; it reads EISS. Position 392 (serine 392) interacts with L-serine.

This sequence belongs to the class-II aminoacyl-tRNA synthetase family. Type-1 seryl-tRNA synthetase subfamily. Homodimer. The tRNA molecule binds across the dimer.

The protein resides in the cytoplasm. It catalyses the reaction tRNA(Ser) + L-serine + ATP = L-seryl-tRNA(Ser) + AMP + diphosphate + H(+). The catalysed reaction is tRNA(Sec) + L-serine + ATP = L-seryl-tRNA(Sec) + AMP + diphosphate + H(+). It functions in the pathway aminoacyl-tRNA biosynthesis; selenocysteinyl-tRNA(Sec) biosynthesis; L-seryl-tRNA(Sec) from L-serine and tRNA(Sec): step 1/1. Catalyzes the attachment of serine to tRNA(Ser). Is also able to aminoacylate tRNA(Sec) with serine, to form the misacylated tRNA L-seryl-tRNA(Sec), which will be further converted into selenocysteinyl-tRNA(Sec). In Aeromonas hydrophila subsp. hydrophila (strain ATCC 7966 / DSM 30187 / BCRC 13018 / CCUG 14551 / JCM 1027 / KCTC 2358 / NCIMB 9240 / NCTC 8049), this protein is Serine--tRNA ligase.